A 104-amino-acid polypeptide reads, in one-letter code: Large ribosomal subunit protein uL24 (104 aa).

The protein belongs to the universal ribosomal protein uL24 family. Part of the 50S ribosomal subunit.

Its function is as follows. One of two assembly initiator proteins, it binds directly to the 5'-end of the 23S rRNA, where it nucleates assembly of the 50S subunit. Functionally, one of the proteins that surrounds the polypeptide exit tunnel on the outside of the subunit. The polypeptide is Large ribosomal subunit protein uL24 (Cronobacter sakazakii (strain ATCC BAA-894) (Enterobacter sakazakii)).